The primary structure comprises 124 residues: Small ribosomal subunit protein uS12 (124 aa).

Residues 1–29 (MATINQLVRKGRKRRVAKSNVPALEASPQ) form a disordered region. A 3-methylthioaspartic acid modification is found at Asp89. The interval 101–124 (AADTAGVDKRRQGRSKYGAKRPKS) is disordered. Basic residues predominate over residues 111-124 (RQGRSKYGAKRPKS).

Belongs to the universal ribosomal protein uS12 family. As to quaternary structure, part of the 30S ribosomal subunit. Contacts proteins S8 and S17. May interact with IF1 in the 30S initiation complex.

Functionally, with S4 and S5 plays an important role in translational accuracy. Interacts with and stabilizes bases of the 16S rRNA that are involved in tRNA selection in the A site and with the mRNA backbone. Located at the interface of the 30S and 50S subunits, it traverses the body of the 30S subunit contacting proteins on the other side and probably holding the rRNA structure together. The combined cluster of proteins S8, S12 and S17 appears to hold together the shoulder and platform of the 30S subunit. The protein is Small ribosomal subunit protein uS12 of Alkalilimnicola ehrlichii (strain ATCC BAA-1101 / DSM 17681 / MLHE-1).